Reading from the N-terminus, the 593-residue chain is Chromosomal replication initiator protein DnaA (593 aa).

The domain I, interacts with DnaA modulators stretch occupies residues 1–71; sequence MSDPCWEQCV…EIISNSDAGP (71 aa). Positions 71–256 are domain II; the sequence is PKSLEIAVAQ…DVEGGIQHKH (186 aa). The tract at residues 97 to 186 is disordered; the sequence is AVPVPDPLPS…STESSADRER (90 aa). A compositionally biased stretch (polar residues) spans 113-124; it reads SFQPPKGNTSAD. Positions 257 to 473 are domain III, AAA+ region; the sequence is NLNTTFIFDN…GALKRVIANA (217 aa). ATP-binding residues include G301, G303, K304, and T305. The interval 474-593 is domain IV, binds dsDNA; sequence QFTQRSISVE…VKNLLRTLTT (120 aa).

Belongs to the DnaA family. Oligomerizes as a right-handed, spiral filament on DNA at oriC.

It is found in the cytoplasm. Functionally, plays an essential role in the initiation and regulation of chromosomal replication. ATP-DnaA binds to the origin of replication (oriC) to initiate formation of the DNA replication initiation complex once per cell cycle. Binds the DnaA box (a 9 base pair repeat at the origin) and separates the double-stranded (ds)DNA. Forms a right-handed helical filament on oriC DNA; dsDNA binds to the exterior of the filament while single-stranded (ss)DNA is stabiized in the filament's interior. The ATP-DnaA-oriC complex binds and stabilizes one strand of the AT-rich DNA unwinding element (DUE), permitting loading of DNA polymerase. After initiation quickly degrades to an ADP-DnaA complex that is not apt for DNA replication. Binds acidic phospholipids. This is Chromosomal replication initiator protein DnaA from Teredinibacter turnerae (strain ATCC 39867 / T7901).